The primary structure comprises 403 residues: Exodeoxyribonuclease 7 large subunit (403 aa).

Belongs to the XseA family. In terms of assembly, heterooligomer composed of large and small subunits.

The protein resides in the cytoplasm. It carries out the reaction Exonucleolytic cleavage in either 5'- to 3'- or 3'- to 5'-direction to yield nucleoside 5'-phosphates.. Functionally, bidirectionally degrades single-stranded DNA into large acid-insoluble oligonucleotides, which are then degraded further into small acid-soluble oligonucleotides. The chain is Exodeoxyribonuclease 7 large subunit from Streptomyces griseus subsp. griseus (strain JCM 4626 / CBS 651.72 / NBRC 13350 / KCC S-0626 / ISP 5235).